Reading from the N-terminus, the 450-residue chain is ATP-dependent protease ATPase subunit HslU (450 aa).

ATP is bound by residues V29, 71 to 76, D261, E328, and R400; that span reads GVGKTE.

It belongs to the ClpX chaperone family. HslU subfamily. A double ring-shaped homohexamer of HslV is capped on each side by a ring-shaped HslU homohexamer. The assembly of the HslU/HslV complex is dependent on binding of ATP.

The protein localises to the cytoplasm. In terms of biological role, ATPase subunit of a proteasome-like degradation complex; this subunit has chaperone activity. The binding of ATP and its subsequent hydrolysis by HslU are essential for unfolding of protein substrates subsequently hydrolyzed by HslV. HslU recognizes the N-terminal part of its protein substrates and unfolds these before they are guided to HslV for hydrolysis. In Rickettsia canadensis (strain McKiel), this protein is ATP-dependent protease ATPase subunit HslU.